The chain runs to 1287 residues: DENN domain-containing protein 5A (1287 aa).

One can recognise a uDENN domain in the interval 57–259 (STTEGENFEQ…EVPLPPPGRS (203 aa)). Position 193 is a phosphoserine (S193). A cDENN domain is found at 278–414 (ELPLFDFPVK…LEFVQEVSEI (137 aa)). The 183-residue stretch at 416 to 598 (MAFGVPPEGN…IMCHDDDDKD (183 aa)) folds into the dDENN domain. The region spanning 787–950 (VEENTLIASL…DYFCFTNVFT (164 aa)) is the RUN 1 domain. The PLAT domain maps to 954–1062 (IPYHILIVPS…DDGSLERVLV (109 aa)). T1079 carries the phosphothreonine modification. Phosphoserine is present on residues S1085, S1087, and S1096. Positions 1134–1280 (TLLLCGECGL…QEFNITLDTS (147 aa)) constitute an RUN 2 domain.

Belongs to the RAB6IP1 family. In terms of assembly, interacts with RAB6A bound to GTP. Expressed in developing brain and developing neurons.

Its subcellular location is the golgi apparatus membrane. Guanine nucleotide exchange factor (GEF) which may activate RAB6A and RAB39A and/or RAB39B. Promotes the exchange of GDP to GTP, converting inactive GDP-bound Rab proteins into their active GTP-bound form. Involved in the negative regulation of neurite outgrowth. In Rattus norvegicus (Rat), this protein is DENN domain-containing protein 5A (Dennd5a).